The primary structure comprises 284 residues: Ermin (284 aa).

A disordered region spans residues 1–61; sequence MTDVPATFTQ…APTKGSQEER (61 aa). S73 is subject to Phosphoserine. Positions 108 to 251 are disordered; sequence TFREGRQWEK…PTLGKKSDIS (144 aa). Composition is skewed to basic and acidic residues over residues 126–140 and 171–183; these read EIRRQKERITEQPLK and LHSKHDEEQKVWD. Positions 184–200 are enriched in acidic residues; it reads EEIDDDDDDNCNDDEDE. Positions 201–220 are enriched in basic and acidic residues; the sequence is VRVIEFKKKHEEVSQFKEEG. Residues S214, S226, S230, and S233 each carry the phosphoserine modification. The segment covering 225 to 235 has biased composition (low complexity); that stretch reads DSPLSSASSQA. T237 carries the post-translational modification Phosphothreonine. Residues 265-284 are binds actin; the sequence is KIRKGNTKQRIDEFESMMHL.

Binds actin.

It localises to the cytoplasm. It is found in the cytoskeleton. Functionally, plays a role in cytoskeletal rearrangements during the late wrapping and/or compaction phases of myelinogenesis as well as in maintenance and stability of myelin sheath in the adult. May play an important role in late-stage oligodendroglia maturation, myelin/Ranvier node formation during CNS development, and in the maintenance and plasticity of related structures in the mature CNS. In Pongo abelii (Sumatran orangutan), this protein is Ermin (ERMN).